Here is a 635-residue protein sequence, read N- to C-terminus: MATAEIDDLIEKLKTTSVSPANTTNLLCEISATKDPKLFDKHELAECFLGLTKCDDTNVRKEAAKCIAEITKSEVQRKKFTKRNIIAAFLECLRQVPTSDGSMELPIQICRALGNICYLNDEARDLILELEGDAVLLRLLDITTIEDVANAAQFIKVRGGLLSNYLLGGEGLAKRAMELGVMKKLQGIIDIGASNVEQHEDLLLNTLPLLSILTENVSDLNFDSSLNIQLSRILAASTNPDLAEMCLELLHYQAESDEVKLILAKDGLCETIYNLLEKYKTLASTSEARALMKLACELIVLILTGDDSMHYLYTTPLLKNMVDWLDSTDIDLLTTGVLALGNFARTDSHCIYFVEQQTMNKLLEVLAKNNGVKDDVRLQHALLSALRNLVIPKPNKNAVIQAGLVQTILPMLEIHQPPVVFKLLGTLRMTVDGQEKLALELLKNKTLIEQLVHWSKSSDYAGVTGESLRLMAWLIKHAYLSKIAYALPRKGDAPAEQIADKIPLTQDYDRSSLSEFLANEGTVEAMVSMLTAQHLVMQNEALIALCILSVVYLSQPSEAAQAQLLQDELVKCEVGKKLAELISKSSDTMTKEIVENLQNCVNLLKSSEQLVAHLEQHNINELLKSIPILTEYCTL.

ARM repeat units lie at residues 72–118 (KSEV…NICY), 346–391 (TDSH…NLVI), 392–432 (PKPN…MTVD), and 510–550 (RSSL…ILSV).

In terms of assembly, interacts with Miro.

The protein resides in the endoplasmic reticulum. The protein localises to the mitochondrion. It is found in the cytoplasm. Its subcellular location is the cytosol. In terms of biological role, probably acts as a GEF (guanine nucleotide exchange factor) for the Rho family of small GTP-binding proteins (G proteins) that stimulates the dissociation of GDP to enable subsequent binding of GTP. May also chaperone the processing and/or trafficking of small GTPases independently of GEF activity. By interacting with Miro, promotes mitochondrial fission in response to high calcium concentrations. This Drosophila melanogaster (Fruit fly) protein is GTPase-GDP dissociation stimulator vimar.